A 269-amino-acid polypeptide reads, in one-letter code: Imidazole glycerol phosphate synthase subunit HisF (269 aa).

Residues aspartate 23 and aspartate 142 contribute to the active site.

The protein belongs to the HisA/HisF family. Heterodimer of HisH and HisF.

It localises to the cytoplasm. It carries out the reaction 5-[(5-phospho-1-deoxy-D-ribulos-1-ylimino)methylamino]-1-(5-phospho-beta-D-ribosyl)imidazole-4-carboxamide + L-glutamine = D-erythro-1-(imidazol-4-yl)glycerol 3-phosphate + 5-amino-1-(5-phospho-beta-D-ribosyl)imidazole-4-carboxamide + L-glutamate + H(+). Its pathway is amino-acid biosynthesis; L-histidine biosynthesis; L-histidine from 5-phospho-alpha-D-ribose 1-diphosphate: step 5/9. Its function is as follows. IGPS catalyzes the conversion of PRFAR and glutamine to IGP, AICAR and glutamate. The HisF subunit catalyzes the cyclization activity that produces IGP and AICAR from PRFAR using the ammonia provided by the HisH subunit. This chain is Imidazole glycerol phosphate synthase subunit HisF, found in Bordetella pertussis (strain Tohama I / ATCC BAA-589 / NCTC 13251).